A 240-amino-acid chain; its full sequence is Vacuolar-sorting protein SNF7 (240 aa).

Thr-72 is subject to Phosphothreonine. A phosphoserine mark is found at Ser-119 and Ser-193. A disordered region spans residues Ser-193–Leu-240. Residues Asn-195–Asn-212 are compositionally biased toward polar residues. Over residues Gly-217 to Glu-228 the composition is skewed to acidic residues. Lys-229 participates in a covalent cross-link: Glycyl lysine isopeptide (Lys-Gly) (interchain with G-Cter in ubiquitin). The segment covering Lys-229–Leu-240 has biased composition (basic and acidic residues).

This sequence belongs to the SNF7 family. In terms of assembly, core component of the ESCRT-III complex (endosomal sorting required for transport complex III). ESCRT-III appears to be sequentially assembled as a flat lattice on the endosome membrane and forms a transient 450 kDa complex that contains DID4, oligomerized SNF7, VPS20 and VPS24. SNF7 polymerizes into spirals at the surface of lipid bilayers. SNF7 polymerization is nucleated by association of SNF7 with VPS20; the process is terminated through association of VPS24, possibly by capping the SNF7 filament. Interacts with VTA1; the interaction requires DID2. Interacts with BRO1. Interacts with DOA4. Interacts with HEH1 and HEH2. Interacts with RIM20 and YGR122W.

The protein localises to the cytoplasm. The protein resides in the endosome membrane. Its subcellular location is the nucleus envelope. Acts a component of the ESCRT-III complex required for the sorting and concentration of proteins resulting in the entry of these proteins into the invaginating vesicles of the multivesicular body (MVB). The sequential action of ESCRT-0, -I, and -II together with the ordered assembly of ESCRT-III links membrane invagination to cargo sorting. Membrane scission in the neck of the growing vesicle releases mature, cargo-laden ILVs into the lumen. ESCRT-III is critical for late steps in MVB sorting, such as membrane invagination and final cargo sorting and recruitment of late-acting components of the sorting machinery. SNF7 is the most abundant ESCRT-III subunit which forms membrane-sculpting filaments with 30 Angstrom periodicity and a exposed cationic membrane-binding surface. Its activation requires a prominent conformational rearrangement to expose protein-membrane and protein-protein interfaces. SNF7 filaments then form spirals that could function as spiral springs. The elastic expansion of compressed SNF7 spirals generates an area difference between the two sides of the membrane and thus curvature which could be the origin of membrane deformation leading eventually to fission. SNF7 recruits BRO1, which in turn recruits DOA4, which deubiquitinates cargos before their enclosure within MVB vesicles. ESCRT-III is also recruited to the nuclear envelope (NE) by integral INM proteins to surveil and clear defective nuclear pore complex (NPC) assembly intermediates to ensure the fidelity of NPC assembly. In Saccharomyces cerevisiae (strain ATCC 204508 / S288c) (Baker's yeast), this protein is Vacuolar-sorting protein SNF7.